Here is a 432-residue protein sequence, read N- to C-terminus: Amino-acid acetyltransferase (432 aa).

An N-acetyltransferase domain is found at 286–425 (EQLREAGIED…ASLYNFQRNS (140 aa)).

The protein belongs to the acetyltransferase family. ArgA subfamily.

The protein localises to the cytoplasm. It carries out the reaction L-glutamate + acetyl-CoA = N-acetyl-L-glutamate + CoA + H(+). It participates in amino-acid biosynthesis; L-arginine biosynthesis; N(2)-acetyl-L-ornithine from L-glutamate: step 1/4. This chain is Amino-acid acetyltransferase, found in Pseudomonas paraeruginosa (strain DSM 24068 / PA7) (Pseudomonas aeruginosa (strain PA7)).